A 289-amino-acid polypeptide reads, in one-letter code: Oxaloacetate decarboxylase (289 aa).

Position 50 (Ser50) interacts with substrate. Asp88 is a binding site for Mg(2+). Substrate is bound by residues Arg159 and His235.

This sequence belongs to the isocitrate lyase/PEP mutase superfamily. Oxaloacetate decarboxylase family. In terms of assembly, homotetramer; dimer of dimers. Mg(2+) serves as cofactor.

It carries out the reaction oxaloacetate + H(+) = pyruvate + CO2. Catalyzes the decarboxylation of oxaloacetate into pyruvate. Seems to play a role in maintaining cellular concentrations of bicarbonate and pyruvate. The protein is Oxaloacetate decarboxylase of Pseudomonas fluorescens (strain ATCC BAA-477 / NRRL B-23932 / Pf-5).